We begin with the raw amino-acid sequence, 428 residues long: MASRQTAIPEKLSRKQYKAAMKKEKRKKRRQKMARLRALEAPPEEDDDVSANEELAERLLEIERQRLHEEWLLREEKAQEEFRIKKKKEEAARKQKEEQERQIKAEWEEQQKKQREEEEQKLQEKREREEAVQKMLDQAENERIWQNPEPPKDLRLEKYRPSCPFYNKTGACRFGNRCSRKHDFPTSSPTLLVKSMFTTFGMEQCRRDDYDSDANLEYSEEETYQQFLDFYHDVLPEFKNVGKVIQFKVSCNLEPHLRGNVYVQYQSEEECQAALSLFNGRWYAGRQLQCEFCPVTRWKVAICGLFEMQKCPKGKHCNFLHVFRNPNNEFREANRDIYMSPPAWTGSSGKNSDRRERKDHHEEYYSKSRSYHSGSYHSSKRNRESERKSPHRWKKSHKQTTKSHERHSSRRGREEDSSPGPQSQSHRT.

The interval 1–51 is disordered; sequence MASRQTAIPEKLSRKQYKAAMKKEKRKKRRQKMARLRALEAPPEEDDDVSA. A compositionally biased stretch (basic residues) spans 23-35; the sequence is KEKRKKRRQKMAR. Positions 42-51 are enriched in acidic residues; that stretch reads PPEEDDDVSA. Residue serine 50 is modified to Phosphoserine. The C3H1-type 1 zinc-finger motif lies at 157–185; sequence EKYRPSCPFYNKTGACRFGNRCSRKHDFP. In terms of domain architecture, RRM spans 189-295; it reads PTLLVKSMFT…RQLQCEFCPV (107 aa). The C3H1-type 2 zinc-finger motif lies at 297–324; that stretch reads RWKVAICGLFEMQKCPKGKHCNFLHVFR. The tract at residues 339–428 is disordered; sequence MSPPAWTGSS…PGPQSQSHRT (90 aa). Serine 340 is subject to Phosphoserine. The span at 351–366 shows a compositional bias: basic and acidic residues; the sequence is NSDRRERKDHHEEYYS. Over residues 367–377 the composition is skewed to low complexity; that stretch reads KSRSYHSGSYH. Serine 375 carries the phosphoserine modification. The span at 389–410 shows a compositional bias: basic residues; the sequence is SPHRWKKSHKQTTKSHERHSSR. Polar residues predominate over residues 419–428; it reads PGPQSQSHRT.

Interacts with SF3B1. Interacts with ZCRB1. In terms of tissue distribution, highest expression levels are detected in the brain, and lower expression levels in other tissues like epididymis, testis, bone marrow or muscle. In testis, expressed in both Sertoli and spermatogenic cell.

The protein localises to the nucleus. Functionally, plays a role in splicing of the U12-type introns. Implicated also in removal of U2 introns positioned adjacent to a U12 intron. This chain is U2 small nuclear ribonucleoprotein auxiliary factor 35 kDa subunit-related protein 2-like, found in Mus musculus (Mouse).